A 2178-amino-acid polypeptide reads, in one-letter code: MGAQVSTQKSGSHENQNILTNGSNQTFTVINYYKDAASSSSAGQSFSMDPSKFTEPVKDLMLKGAPALNSPNVEACGYSDRVQQITLGNSTITTQEAANAIVCYAEWPEYLSDNDASDVNKTSKPDISVCRFYTLDSKTWKATSKGWCWKLPDALKDMGVFGQNMFYHSLGRTGYTIHVQCNATKFHSGCLLVVVIPEHQLASHEGGTVSVKYKYTHPGDRGIDLDTVEVAGGPTSDAIYNMDGTLLGNLLIFPHQFINLRTNNTATIVVPYINSVPIDSMTRHNNVSLMVVPIAPLNAPTGSSPTLPVTVTIAPMCTEFTGIRSRSIVPQGLPTTTLPGSGQFLTTDDRQSPSALPSYEPTPRIHIPGKVRNLLEIIQVGTLIPMNNTGTNDNVTNYLIPLHADRQNEQIFGTKLYIGDGVFKTTLLGEIAQYYTHWSGSLRISLMYTGPALSSAKIILAYTPPGTRGPEDRKEAMLGTHVVWDIGLQSTIVMTIPWTSGVQFRYTDPDTYTSAGYLSCWYQTSLILPPQTSGQVYLLSFISACPDFKLRLMKDTQTISQTDALTEGLSDELEEVIVEKTKQTLASVSSGPKHTQSVPALTANETGATLPTRPSDNVETRTTYMHFNGSETDVESFLGRAACVHVTEIKNKNAAGLDNHRKEGLFNDWKINLSSLVQLRKKLELFTYVRFDSEYTILATASQPEASSYSSNLTVQAMYVPPGAPNPKEWDDYTWQSASNPSVFFKVGETSRFSVPFVGIASAYNCFYDGYSHDDPDTPYGITVLNHMGSMAFRVVNEHDVHTTIVKIRVYHRAKHVEAWIPRAPRALPYVSIGRTNYPRDSKTIIKKRTNIKTYGLGPRFGGVFTSNVKIINYHLMTPDDHLNLVAPYPNRDLAVVATGAHGAETIPHCNCTSGVYYSRYYRKFYPIICERPTNIWIEGSSYYPSRYQAGVMKGVGPAEPGDCGGILRCIHGPIGLLTAGGGGYVCFADIRQLDFIADEQGLGDYITSLGRAFGTGFTDQISAKVCELQDVAKDFLTTKVLSKVVKMISALVIICRNHDDLVTVTATLALLGCDGSPWRFLKMYISKHFQVPYIERQANDGWFRKFNDACNAAKGLEWIANKISKLIEWIKNKVLPQAREKLEFCSKLKQLDILERQIASIHDSNPTQEKREQLFNNVLWLEQMSQKFSPLYASEAKRIRDLKNKITNYMQFKSKQRTEPVCVLIHGTPGSGKSLTTSIVGRALAEHFNSSVYSLPPDPKHFDGYQQQEVVIMDDLNQNPDGQDISMFCQMVSSVDFLPPMASLDNKGMLFTSNFVLASTNSNTLSPPTILNPEALIRRFGFDLDICMHSTYTKNGKLNAAMATSLCKDCHQPSNFKKCCPLVCGKAISLVDRVSNVRFSIDQLVTAIINDYKNKVKITDSLEVLFQGPVYKDLEIDICNTPPPECISDLLKSVDSEEVREYCKKKKWIIPQISTNIERAVNQASMIINTILMFVSTLGIVYVIYKLFAQTQGPYSGNPVHNKLKPPTLKPVVVQGPNTEFALSLLRKNILTITTEKGEFTSLGIHDRICVLPTHAQPGDNVLVNGQKIQIKDKYKLVDPDNTNLELTIIELDRNEKFRDIRGFISEDLEGLDATLVVHSNGFTNTILDVGPITMAGLINLSNTPTTRMIRYDYPTKTGQCGGVLCTTGKIFGIHVGGNGRRGFSAQLKKQYFVEKQGLIVSKQKVRDIGLNPINTPTKTKLHPSVFYNVFPGSKQPAVLNDNDPRLEVKLAESLFSKYKGNVQMEPTENMLIAVDHYAGQLMSLDISTKELTLKEALYGVDGLEPIDVTTSAGYPYVSLGIKKRDILNKETQDVEKMKFYLDKYGIDLPLVTYIKDELRSVDKVRLGKSRLIEASSLNDSVNMRMKLGNLYKAFHQNPGIITESAVGCDPDVFWSVIPCLMDGHLMAFDYSNFDASLSPVWFECLEKVLNKLGFKQPSLIQSICNTHHIFRDEIYRVEGGMPSGCSGTSIFNSMINNIIIRTLILDAYKGIDLDSLRILAYGDDLIVSYPFELDSNILAAIGKNYGLTITPPDKSDAFTKITWENITFLKRYFRPDPQFPFLIHPVMPMQDIYESIRWTRDPRNTQDHVRSLCMLAWHSGEKDYNDFITKIRTTDIGKCLNLPEYSVLRRRWLDLF.

Positions 1–20 (MGAQVSTQKSGSHENQNILT) are disordered. Residue Gly-2 is the site of N-myristoyl glycine; by host attachment. Topologically, residues 2-1490 (GAQVSTQKSG…AVNQASMIIN (1489 aa)) are cytoplasmic. Residues 564-584 (ALTEGLSDELEEVIVEKTKQT) form an amphipathic alpha-helix region. Active-site for protease 2A activity residues include His-875 and Asp-893. Zn(2+)-binding residues include Cys-910 and Cys-912. Cys-964 acts as the For protease 2A activity in catalysis. The Zn(2+) site is built by Cys-970 and His-972. A membrane-binding region spans residues 1100–1172 (NDGWFRKFND…HDSNPTQEKR (73 aa)). The segment at 1100-1238 (NDGWFRKFND…TPGSGKSLTT (139 aa)) is oligomerization. The segment at 1121 to 1125 (ANKIS) is RNA-binding. One can recognise an SF3 helicase domain in the interval 1204–1360 (KNKITNYMQF…STYTKNGKLN (157 aa)). Zn(2+)-binding residues include Cys-1368, Cys-1371, Cys-1380, and Cys-1385. The C4-type zinc-finger motif lies at 1368-1385 (CKDCHQPSNFKKCCPLVC). The segment at 1412-1419 (DYKNKVKI) is RNA-binding. The segment at 1423–1428 (LEVLFQ) is oligomerization. An intramembrane segment occupies 1491 to 1506 (TILMFVSTLGIVYVIY). Residues 1507 to 2178 (KLFAQTQGPY…VLRRRWLDLF (672 aa)) are Cytoplasmic-facing. Tyr-1516 is modified (O-(5'-phospho-RNA)-tyrosine). Positions 1537-1714 (GPNTEFALSL…FSAQLKKQYF (178 aa)) constitute a Peptidase C3 domain. Active-site for protease 3C activity residues include His-1576, Glu-1607, and Cys-1682. The 114-residue stretch at 1946 to 2059 (HLMAFDYSNF…SYPFELDSNI (114 aa)) folds into the RdRp catalytic domain. Asp-1951 and Asp-2045 together coordinate Mg(2+).

Belongs to the picornaviruses polyprotein family. In terms of assembly, interacts with capsid protein VP1 and capsid protein VP3 to form heterotrimeric protomers. As to quaternary structure, interacts with capsid protein VP0, and capsid protein VP3 to form heterotrimeric protomers. Five protomers subsequently associate to form pentamers which serve as building blocks for the capsid. Interacts with capsid protein VP2, capsid protein VP3 and capsid protein VP4 following cleavage of capsid protein VP0. Interacts with capsid protein VP1 and capsid protein VP3 in the mature capsid. In terms of assembly, interacts with capsid protein VP0 and capsid protein VP1 to form heterotrimeric protomers. Five protomers subsequently associate to form pentamers which serve as building blocks for the capsid. Interacts with capsid protein VP4 in the mature capsid. Interacts with protein 2C; this interaction may be important for virion morphogenesis. As to quaternary structure, interacts with capsid protein VP1 and capsid protein VP3. Homodimer. In terms of assembly, homohexamer; forms a hexameric ring structure with 6-fold symmetry characteristic of AAA+ ATPases. Interacts (via N-terminus) with host RTN3 (via reticulon domain); this interaction is important for viral replication. Interacts with capsid protein VP3; this interaction may be important for virion morphogenesis. As to quaternary structure, interacts with protein 3CD. Homodimer. Interacts with host GBF1. Interacts (via GOLD domain) with host ACBD3 (via GOLD domain); this interaction allows the formation of a viral protein 3A/ACBD3 heterotetramer with a 2:2 stoichiometry, which will stimulate the recruitment of host PI4KB in order to synthesize PI4P at the viral RNA replication sites. In terms of assembly, interacts with RNA-directed RNA polymerase. As to quaternary structure, interacts with protein 3AB and with RNA-directed RNA polymerase. Interacts with Viral protein genome-linked and with protein 3CD. The cofactor is Mg(2+). In terms of processing, specific enzymatic cleavages in vivo by the viral proteases yield processing intermediates and the mature proteins. Myristoylation is required for the formation of pentamers during virus assembly. Further assembly of 12 pentamers and a molecule of genomic RNA generates the provirion. Post-translationally, during virion maturation, immature virions are rendered infectious following cleavage of VP0 into VP4 and VP2. This maturation seems to be an autocatalytic event triggered by the presence of RNA in the capsid and it is followed by a conformational change infectious virion. In terms of processing, myristoylation is required during RNA encapsidation and formation of the mature virus particle. VPg is uridylylated by the polymerase into VPg-pUpU. This acts as a nucleotide-peptide primer for the genomic RNA replication.

It localises to the virion. The protein resides in the host cytoplasm. It is found in the host cytoplasmic vesicle membrane. The protein localises to the host nucleus. It catalyses the reaction a ribonucleoside 5'-triphosphate + H2O = a ribonucleoside 5'-diphosphate + phosphate + H(+). It carries out the reaction Selective cleavage of Tyr-|-Gly bond in the picornavirus polyprotein.. The enzyme catalyses RNA(n) + a ribonucleoside 5'-triphosphate = RNA(n+1) + diphosphate. The catalysed reaction is Selective cleavage of Gln-|-Gly bond in the poliovirus polyprotein. In other picornavirus reactions Glu may be substituted for Gln, and Ser or Thr for Gly.. Its activity is regulated as follows. Replication or transcription is subject to high level of random mutations by the nucleotide analog ribavirin. Functionally, forms an icosahedral capsid of pseudo T=3 symmetry with capsid proteins VP2 and VP3. The capsid is 300 Angstroms in diameter, composed of 60 copies of each capsid protein and enclosing the viral positive strand RNA genome. Capsid protein VP1 mainly forms the vertices of the capsid. Capsid protein VP1 interacts with host cell receptor to provide virion attachment to target host cells. This attachment induces virion internalization. Tyrosine kinases are probably involved in the entry process. After binding to its receptor, the capsid undergoes conformational changes. Capsid protein VP1 N-terminus (that contains an amphipathic alpha-helix) and capsid protein VP4 are externalized. Together, they shape a pore in the host membrane through which viral genome is translocated to host cell cytoplasm. Its function is as follows. Forms an icosahedral capsid of pseudo T=3 symmetry with capsid proteins VP2 and VP3. The capsid is 300 Angstroms in diameter, composed of 60 copies of each capsid protein and enclosing the viral positive strand RNA genome. Lies on the inner surface of the capsid shell. After binding to the host receptor, the capsid undergoes conformational changes. Capsid protein VP4 is released, Capsid protein VP1 N-terminus is externalized, and together, they shape a pore in the host membrane through which the viral genome is translocated into the host cell cytoplasm. In terms of biological role, component of immature procapsids, which is cleaved into capsid proteins VP4 and VP2 after maturation. Allows the capsid to remain inactive before the maturation step. Functionally, cysteine protease that cleaves viral polyprotein and specific host proteins. It is responsible for the autocatalytic cleavage between the P1 and P2 regions, which is the first cleavage occurring in the polyprotein. Also cleaves the host translation initiation factor EIF4G1, in order to shut down the capped cellular mRNA translation. Inhibits the host nucleus-cytoplasm protein and RNA trafficking by cleaving host members of the nuclear pores. Counteracts stress granule formation probably by antagonizing its assembly or promoting its dissassembly. Its function is as follows. Plays an essential role in the virus replication cycle by acting as a viroporin. Creates a pore in the host endoplasmic reticulum and as a consequence releases Ca2+ in the cytoplasm of infected cell. In turn, high levels of cytoplasmic calcium may trigger membrane trafficking and transport of viral ER-associated proteins to viroplasms, sites of viral genome replication. Induces and associates with structural rearrangements of intracellular membranes. Displays RNA-binding, nucleotide binding and NTPase activities. May play a role in virion morphogenesis and viral RNA encapsidation by interacting with the capsid protein VP3. In terms of biological role, localizes the viral replication complex to the surface of membranous vesicles. Together with protein 3CD binds the Cis-Active RNA Element (CRE) which is involved in RNA synthesis initiation. Acts as a cofactor to stimulate the activity of 3D polymerase, maybe through a nucleid acid chaperone activity. Functionally, localizes the viral replication complex to the surface of membranous vesicles. It inhibits host cell endoplasmic reticulum-to-Golgi apparatus transport and causes the disassembly of the Golgi complex, possibly through GBF1 interaction. This would result in depletion of MHC, trail receptors and IFN receptors at the host cell surface. Plays an essential role in viral RNA replication by recruiting ACBD3 and PI4KB at the viral replication sites, thereby allowing the formation of the rearranged membranous structures where viral replication takes place. Its function is as follows. Acts as a primer for viral RNA replication and remains covalently bound to viral genomic RNA. VPg is uridylylated prior to priming replication into VPg-pUpU. The oriI viral genomic sequence may act as a template for this. The VPg-pUpU is then used as primer on the genomic RNA poly(A) by the RNA-dependent RNA polymerase to replicate the viral genome. During genome replication, the VPg-RNA linkage is removed by the host TDP2, thereby accelerating replication. During the late stage of the replication cycle, host TDP2 is excluded from sites of viral RNA synthesis and encapsidation, allowing for the generation of progeny virions. Involved in the viral replication complex and viral polypeptide maturation. It exhibits protease activity with a specificity and catalytic efficiency that is different from protease 3C. Protein 3CD lacks polymerase activity. Protein 3CD binds to the 5'UTR of the viral genome. In terms of biological role, replicates the viral genomic RNA on the surface of intracellular membranes. May form linear arrays of subunits that propagate along a strong head-to-tail interaction called interface-I. Covalently attaches UMP to a tyrosine of VPg, which is used to prime RNA synthesis. The positive stranded RNA genome is first replicated at virus induced membranous vesicles, creating a dsRNA genomic replication form. This dsRNA is then used as template to synthesize positive stranded RNA genomes. ss(+)RNA genomes are either translated, replicated or encapsidated. Functionally, major viral protease that mediates proteolytic processing of the polyprotein. Cleaves host EIF5B, contributing to host translation shutoff. Also cleaves host PABPC1, contributing to host translation shutoff. Cleaves host NLRP1, triggers host N-glycine-mediated degradation of the autoinhibitory NLRP1 N-terminal fragment. This Homo sapiens (Human) protein is Genome polyprotein.